A 327-amino-acid polypeptide reads, in one-letter code: MFNDIPVFDYEDIQLIPNKCIITSRSQADTSVTLGKYQFKLPVIPANMQTIIDETIAEQLAKEGYFYIMHRFDEDSRKPFIKRMHEQGLIASISVGVKACEYEFVTSLKEDAPEFITIDIAHGHANSVIDMIKHIKTELPETFVIAGNVGTPEAVRELENAGADATKVGIGPGKVCITKVKTGFGTGGWQLAALRWCAKAARKPIIADGGIRTHGDIAKSIRFGASMVMIGSLFAGHFESPGKTVEVDGETFKEYYGSASEYQKGEHKNVEGKKILLPTKGHLSDTLTEMQQDLQSSISYAGGKDLDSLRHVDYVIVKNSIWNGDSI.

Cys176 functions as the Thioimidate intermediate in the catalytic mechanism. 205-228 is a binding site for NADP(+); sequence IIADGGIRTHGDIAKSIRFGASMV.

It belongs to the IMPDH/GMPR family. GuaC type 2 subfamily.

The enzyme catalyses IMP + NH4(+) + NADP(+) = GMP + NADPH + 2 H(+). Its function is as follows. Catalyzes the irreversible NADPH-dependent deamination of GMP to IMP. It functions in the conversion of nucleobase, nucleoside and nucleotide derivatives of G to A nucleotides, and in maintaining the intracellular balance of A and G nucleotides. This chain is GMP reductase, found in Streptococcus pyogenes serotype M1.